We begin with the raw amino-acid sequence, 95 residues long: Integration host factor subunit beta (95 aa).

The protein belongs to the bacterial histone-like protein family. As to quaternary structure, heterodimer of an alpha and a beta chain.

Functionally, this protein is one of the two subunits of integration host factor, a specific DNA-binding protein that functions in genetic recombination as well as in transcriptional and translational control. The sequence is that of Integration host factor subunit beta from Ruegeria sp. (strain TM1040) (Silicibacter sp.).